Here is a 436-residue protein sequence, read N- to C-terminus: Histidinol dehydrogenase (436 aa).

Positions 136, 198, and 221 each coordinate NAD(+). Substrate-binding residues include Ser244, Gln266, and His269. Residues Gln266 and His269 each contribute to the Zn(2+) site. Active-site proton acceptor residues include Glu334 and His335. Positions 335, 368, 422, and 427 each coordinate substrate. Asp368 is a binding site for Zn(2+). His427 is a binding site for Zn(2+).

Belongs to the histidinol dehydrogenase family. Requires Zn(2+) as cofactor.

It catalyses the reaction L-histidinol + 2 NAD(+) + H2O = L-histidine + 2 NADH + 3 H(+). It functions in the pathway amino-acid biosynthesis; L-histidine biosynthesis; L-histidine from 5-phospho-alpha-D-ribose 1-diphosphate: step 9/9. Its function is as follows. Catalyzes the sequential NAD-dependent oxidations of L-histidinol to L-histidinaldehyde and then to L-histidine. The polypeptide is Histidinol dehydrogenase (Dehalococcoides mccartyi (strain CBDB1)).